Consider the following 170-residue polypeptide: Phosphopantetheine adenylyltransferase (170 aa).

Residue S14 coordinates substrate. Residues 14–15 and H22 each bind ATP; that span reads SF. K46, L79, and R93 together coordinate substrate. Residues 94 to 96, E104, and 129 to 135 each bind ATP; these read GIR and IAEVSST.

This sequence belongs to the bacterial CoaD family. As to quaternary structure, homohexamer. It depends on Mg(2+) as a cofactor.

It is found in the cytoplasm. The enzyme catalyses (R)-4'-phosphopantetheine + ATP + H(+) = 3'-dephospho-CoA + diphosphate. The protein operates within cofactor biosynthesis; coenzyme A biosynthesis; CoA from (R)-pantothenate: step 4/5. In terms of biological role, reversibly transfers an adenylyl group from ATP to 4'-phosphopantetheine, yielding dephospho-CoA (dPCoA) and pyrophosphate. The chain is Phosphopantetheine adenylyltransferase from Neisseria meningitidis serogroup C (strain 053442).